We begin with the raw amino-acid sequence, 279 residues long: Ribosomal RNA small subunit methyltransferase A (279 aa).

6 residues coordinate S-adenosyl-L-methionine: Asn-25, Leu-27, Gly-52, Glu-73, Asp-98, and Asn-120.

It belongs to the class I-like SAM-binding methyltransferase superfamily. rRNA adenine N(6)-methyltransferase family. RsmA subfamily.

Its subcellular location is the cytoplasm. It catalyses the reaction adenosine(1518)/adenosine(1519) in 16S rRNA + 4 S-adenosyl-L-methionine = N(6)-dimethyladenosine(1518)/N(6)-dimethyladenosine(1519) in 16S rRNA + 4 S-adenosyl-L-homocysteine + 4 H(+). Functionally, specifically dimethylates two adjacent adenosines (A1518 and A1519) in the loop of a conserved hairpin near the 3'-end of 16S rRNA in the 30S particle. May play a critical role in biogenesis of 30S subunits. In Magnetococcus marinus (strain ATCC BAA-1437 / JCM 17883 / MC-1), this protein is Ribosomal RNA small subunit methyltransferase A.